A 36-amino-acid chain; its full sequence is Photosystem I reaction center subunit VIII (36 aa).

Residues 6–28 (LPSIFVPLIGLFFPAIAMASLFL) traverse the membrane as a helical segment.

The protein belongs to the PsaI family.

The protein resides in the plastid. Its subcellular location is the chloroplast thylakoid membrane. Functionally, may help in the organization of the PsaL subunit. In Amborella trichopoda, this protein is Photosystem I reaction center subunit VIII.